We begin with the raw amino-acid sequence, 620 residues long: uncharacterized protein (620 aa).

The next 4 helical transmembrane spans lie at 66–86 (LLNFSDFVSGAGIDTVFNQII), 238–258 (FFDALFVMLLLVCHLNKNLLW), 546–566 (LGIISAVVFGIVEFFNCVWTI), and 584–604 (IIFISIGTILVLFLLVTILVF).

The protein localises to the cell membrane. This is an uncharacterized protein from Mycoplasma genitalium (strain ATCC 33530 / DSM 19775 / NCTC 10195 / G37) (Mycoplasmoides genitalium).